Reading from the N-terminus, the 178-residue chain is MEKNWYVVHTYSGYENKVKTNLEKRVESMDMTDKIFRVMVPVEEETEVKNGKSKQVSRKVFPGYVLVEMVMTDDSWYVVRNTPGVTGFVGSAGAGSKPTPLLPEEVDAILRQMGMQEERQVEIDFQLKESVKVKEGPFANFIGTIEEIQLDKRKLKVHVNMFGRETPVELEFTQIEKI.

A KOW domain is found at Ser130–Val159.

This sequence belongs to the NusG family.

Functionally, participates in transcription elongation, termination and antitermination. The polypeptide is Transcription termination/antitermination protein NusG (Halalkalibacterium halodurans (strain ATCC BAA-125 / DSM 18197 / FERM 7344 / JCM 9153 / C-125) (Bacillus halodurans)).